A 486-amino-acid chain; its full sequence is Arginine deiminase (486 aa).

The active-site Amidino-cysteine intermediate is the Cys-476.

It belongs to the arginine deiminase family.

The protein localises to the cytoplasm. The catalysed reaction is L-arginine + H2O = L-citrulline + NH4(+). It participates in amino-acid degradation; L-arginine degradation via ADI pathway; carbamoyl phosphate from L-arginine: step 1/2. Functionally, involved in the arginine deiminase pathway of fermentative arginine utilization. This chain is Arginine deiminase (arcA), found in Halobacterium salinarum (strain ATCC 29341 / DSM 671 / R1).